A 444-amino-acid polypeptide reads, in one-letter code: Signal recognition particle 54 kDa protein (444 aa).

Residues 106–113 (GLQGSGKT), 187–191 (DTAGR), and 245–248 (SKLD) contribute to the GTP site.

This sequence belongs to the GTP-binding SRP family. SRP54 subfamily. Part of the signal recognition particle protein translocation system, which is composed of SRP and FtsY. Archaeal SRP consists of a 7S RNA molecule of 300 nucleotides and two protein subunits: SRP54 and SRP19.

It is found in the cytoplasm. It carries out the reaction GTP + H2O = GDP + phosphate + H(+). Its function is as follows. Involved in targeting and insertion of nascent membrane proteins into the cytoplasmic membrane. Binds to the hydrophobic signal sequence of the ribosome-nascent chain (RNC) as it emerges from the ribosomes. The SRP-RNC complex is then targeted to the cytoplasmic membrane where it interacts with the SRP receptor FtsY. This chain is Signal recognition particle 54 kDa protein, found in Methanosphaera stadtmanae (strain ATCC 43021 / DSM 3091 / JCM 11832 / MCB-3).